The following is a 162-amino-acid chain: Phosphopantetheine adenylyltransferase (162 aa).

S9 contributes to the substrate binding site. ATP-binding positions include 9-10 (SF) and H17. Residues K41, T73, and R87 each coordinate substrate. ATP-binding positions include 88-90 (GLR), E98, and 122-128 (NQNISSS).

Belongs to the bacterial CoaD family. In terms of assembly, homohexamer. The cofactor is Mg(2+).

It localises to the cytoplasm. The enzyme catalyses (R)-4'-phosphopantetheine + ATP + H(+) = 3'-dephospho-CoA + diphosphate. The protein operates within cofactor biosynthesis; coenzyme A biosynthesis; CoA from (R)-pantothenate: step 4/5. Reversibly transfers an adenylyl group from ATP to 4'-phosphopantetheine, yielding dephospho-CoA (dPCoA) and pyrophosphate. In Leuconostoc mesenteroides subsp. mesenteroides (strain ATCC 8293 / DSM 20343 / BCRC 11652 / CCM 1803 / JCM 6124 / NCDO 523 / NBRC 100496 / NCIMB 8023 / NCTC 12954 / NRRL B-1118 / 37Y), this protein is Phosphopantetheine adenylyltransferase.